Reading from the N-terminus, the 858-residue chain is MANVSVAAEWQLLYDRYYRKPEIYQMKWKHVDLSRNKVACASFGGPIAVIRDDSKIVQLYAESALRKLRIFNSAGILLSETVWKHPGGRLIGMSWSDDQTLICIVQDGTIYRYNIHAELIEPNMSMGQECFEQNVVECVFWGNGVVCLTEGGQLICIFDFKTMKPSKLPDVPGLAEDDLLQPICLTVREPKYTMSGIAEVLVAVGDDIFVVEEDMVQTIRFDEPSVDDSEMQNDDSGNLIGVVQKMIVSPNGKFLTLFTHDGRIVVVDMETKQIAIDYSCESALPPQQMAWCGMDSVLLYWDEDLMMVGPVGDPVHYFYDEPIILIPECDGVRILSNTNLEFLQRVPDSTESIFKIGSTSPAALLYDALDHFDRRSAKADENLRLIRSSLSEAVESCIDAAGHEFDVTRQRALLRAASYGQAFCSNFQRERVQETCRTLRVLNAVRDPAIGIPLSIQQYKLLTPVVLISRLINANCHLLALRISEYLDMNKEVVIMHWACAKITASPSTPDSHLLEILLDKLQLCKGISYAAVATHADNCGRRKLAAMLVEHEPRSTKQVPLLLSIGEEDTALVKATESGDTDLVYLVIFHIWQKRPPLEFFAMIQGRVLARDLFVAYARCHKHEFLKDFFLSTGQIHEVAFLLWKESWDMGKNPMASKGSPLHGPRIKLIEKARNLFSQTKEHTFESKAAEEHAKLLKIQHELEASTKQAIFVDSSINDTIRTCIVLGNNRAAIKVKTEFKVSDKRWYWLKAFALATIKDWAALEKFSKEKRPPMGFRPFVEACIDADEKAEALKYIPKLSDLVERGEAYARIGMAKEAADCAAQANDGGELLERFRKTFVQNAIFDTLLMPFQGAS.

Belongs to the VPS16 family. As to quaternary structure, core component of at least two putative endosomal tethering complexes, the homotypic fusion and vacuole protein sorting (HOPS) complex and the class C core vacuole/endosome tethering (CORVET) complex. Their common core is composed of the class C Vps proteins VPS11, VCL1, VPS18 and VPS33, which in HOPS further associates with VPS39 and VPS41 and in CORVET with VPS3. As to expression, expressed in roots, leaves, stems, siliques, flowers and mature pollen.

The protein resides in the vacuole membrane. It localises to the prevacuolar compartment membrane. In terms of biological role, required for vacuole biogenesis and vacuole enlargment in dividing and expanding cells. Involved in the docking or fusion of prevacuolar vesicles. Important for the function of both male and female gametophytes, but is not essential for the germination and development of pollen. The protein is Protein VACUOLELESS1 (VCL1) of Arabidopsis thaliana (Mouse-ear cress).